Reading from the N-terminus, the 35-residue chain is Conotoxin Cal6.1f (35 aa).

The propeptide occupies 1–8; the sequence is GLIRPSKR. 3 cysteine pairs are disulfide-bonded: C9–C25, C16–C29, and C24–C34.

Belongs to the conotoxin O1 superfamily. Expressed by the venom duct.

The protein localises to the secreted. Its function is as follows. Probable neurotoxin with unknown target. Possibly targets ion channels. The polypeptide is Conotoxin Cal6.1f (Californiconus californicus (California cone)).